Here is a 200-residue protein sequence, read N- to C-terminus: Nucleoside triphosphate pyrophosphatase (200 aa).

Residue aspartate 79 is the Proton acceptor of the active site.

This sequence belongs to the Maf family. Requires a divalent metal cation as cofactor.

The protein localises to the cytoplasm. The enzyme catalyses a ribonucleoside 5'-triphosphate + H2O = a ribonucleoside 5'-phosphate + diphosphate + H(+). It carries out the reaction a 2'-deoxyribonucleoside 5'-triphosphate + H2O = a 2'-deoxyribonucleoside 5'-phosphate + diphosphate + H(+). Its function is as follows. Nucleoside triphosphate pyrophosphatase. May have a dual role in cell division arrest and in preventing the incorporation of modified nucleotides into cellular nucleic acids. This chain is Nucleoside triphosphate pyrophosphatase, found in Legionella pneumophila (strain Lens).